We begin with the raw amino-acid sequence, 720 residues long: Catalase-peroxidase (720 aa).

A cross-link (tryptophyl-tyrosyl-methioninium (Trp-Tyr) (with M-248)) is located at residues Trp-94 to Tyr-222. His-95 (proton acceptor) is an active-site residue. The segment at residues Tyr-222–Met-248 is a cross-link (tryptophyl-tyrosyl-methioninium (Tyr-Met) (with W-94)). His-263 is a binding site for heme b.

Belongs to the peroxidase family. Peroxidase/catalase subfamily. Homodimer. Heme b is required as a cofactor. Post-translationally, formation of the three residue Trp-Tyr-Met cross-link is important for the catalase, but not the peroxidase activity of the enzyme.

It carries out the reaction H2O2 + AH2 = A + 2 H2O. The catalysed reaction is 2 H2O2 = O2 + 2 H2O. Bifunctional enzyme with both catalase and broad-spectrum peroxidase activity. This chain is Catalase-peroxidase, found in Synechococcus elongatus (strain ATCC 33912 / PCC 7942 / FACHB-805) (Anacystis nidulans R2).